A 94-amino-acid chain; its full sequence is Venom protein 59.1 (94 aa).

The N-terminal stretch at 1–22 (MNSREMFCVFILFASFFYCSYA) is a signal peptide. Intrachain disulfides connect Cys-19–Cys-47, Cys-26–Cys-49, Cys-32–Cys-50, Cys-38–Cys-53, Cys-61–Cys-76, and Cys-70–Cys-91. The region spanning 23-94 (EQECNCDKSC…GEALEICLRA (72 aa)) is the IGFBP N-terminal domain.

As to expression, expressed by the venom gland.

The protein resides in the secreted. The sequence is that of Venom protein 59.1 from Lychas mucronatus (Chinese swimming scorpion).